A 116-amino-acid chain; its full sequence is NADPH-dependent 7-cyano-7-deazaguanine reductase (116 aa).

The Thioimide intermediate role is filled by Cys31. The Proton donor role is filled by Asp38. Substrate-binding positions include Val53–Leu55 and Tyr72–Glu73.

The protein belongs to the GTP cyclohydrolase I family. QueF type 1 subfamily.

The protein localises to the cytoplasm. It catalyses the reaction 7-aminomethyl-7-carbaguanine + 2 NADP(+) = 7-cyano-7-deazaguanine + 2 NADPH + 3 H(+). The protein operates within tRNA modification; tRNA-queuosine biosynthesis. Functionally, catalyzes the NADPH-dependent reduction of 7-cyano-7-deazaguanine (preQ0) to 7-aminomethyl-7-deazaguanine (preQ1). The sequence is that of NADPH-dependent 7-cyano-7-deazaguanine reductase from Chlorobium phaeovibrioides (strain DSM 265 / 1930) (Prosthecochloris vibrioformis (strain DSM 265)).